The chain runs to 297 residues: Protoheme IX farnesyltransferase (297 aa).

9 helical membrane-spanning segments follow: residues 23–43 (VTQL…PGMP), 49–69 (VFGT…NCLI), 93–113 (IQVL…LYHL), 117–137 (LTMW…TVIL), 144–164 (NIVI…AAVA), 171–191 (AWVL…ALAL), 215–235 (RLHI…PYAI), 238–258 (SGAL…WYAW), and 275–295 (FSIL…WVGL).

Belongs to the UbiA prenyltransferase family. Protoheme IX farnesyltransferase subfamily.

It localises to the cell inner membrane. It catalyses the reaction heme b + (2E,6E)-farnesyl diphosphate + H2O = Fe(II)-heme o + diphosphate. Its pathway is porphyrin-containing compound metabolism; heme O biosynthesis; heme O from protoheme: step 1/1. Its function is as follows. Converts heme B (protoheme IX) to heme O by substitution of the vinyl group on carbon 2 of heme B porphyrin ring with a hydroxyethyl farnesyl side group. The chain is Protoheme IX farnesyltransferase from Bordetella bronchiseptica (strain ATCC BAA-588 / NCTC 13252 / RB50) (Alcaligenes bronchisepticus).